Consider the following 141-residue polypeptide: VLSPADKTNLKAAWHKLGGHGGEYGAEALERMFATFPTTKTYFPHFDLSHGSAQVQGHGEKVADALLHAVGNLDDLPGALSALSDLHAHKLRVDPVNFKLLSHCLLVTLAAHHPAEFTPAVHASLDKFLATVSTVLTSKYR.

Residues 1–141 form the Globin domain; the sequence is VLSPADKTNL…VSTVLTSKYR (141 aa). Ser3 bears the Phosphoserine mark. Lys7 carries the N6-succinyllysine modification. At Thr8 the chain carries Phosphothreonine. Lys11 carries the N6-succinyllysine modification. Lys16 carries the post-translational modification N6-acetyllysine; alternate. At Lys16 the chain carries N6-succinyllysine; alternate. Tyr24 carries the phosphotyrosine modification. At Lys40 the chain carries N6-succinyllysine. Position 49 is a phosphoserine (Ser49). His58 lines the O2 pocket. His87 serves as a coordination point for heme b. Ser102 is modified (phosphoserine). The residue at position 108 (Thr108) is a Phosphothreonine. Phosphoserine is present on Ser124. Residues Thr134 and Thr137 each carry the phosphothreonine modification. Ser138 is modified (phosphoserine).

It belongs to the globin family. In terms of assembly, heterotetramer of two alpha chains and two beta chains. In terms of tissue distribution, red blood cells.

Involved in oxygen transport from the lung to the various peripheral tissues. This is Hemoglobin subunit alpha from Tamias striatus (Eastern chipmunk).